We begin with the raw amino-acid sequence, 84 residues long: Cell division topological specificity factor (84 aa).

The protein belongs to the MinE family.

Its function is as follows. Prevents the cell division inhibition by proteins MinC and MinD at internal division sites while permitting inhibition at polar sites. This ensures cell division at the proper site by restricting the formation of a division septum at the midpoint of the long axis of the cell. This Chromohalobacter salexigens (strain ATCC BAA-138 / DSM 3043 / CIP 106854 / NCIMB 13768 / 1H11) protein is Cell division topological specificity factor.